A 344-amino-acid chain; its full sequence is MTVTQLSYKDAGVDIHAGNDLVERIKGDVKRTRRPEVIGGLGGFGALCALPTKYKEPILVSGTDGVGTKLRLAIDLNKHDTIGIDLVAMCVNDLVVQGAEPLFFLDYYATGKLDVDVASSVIKGIANGCEQSCCALVGGETAEMPGMYHAGDYDLAGFCVGVVEKSEIIDGSKVQVGDTLIALGSSGPHSNGYSLIRKVLEVSGTKPMDLLEGKPLSEHFLAPTKIYVKSVLELIKQAEVHAIAHLTGGGFWENIPRVLPADVKAVINEASWEWLPSFKWLQEKGNISRYEMYRTFNCGVGMVIALPEKDVETALKVLTEAGENAWVIGKIEALGSGTEQVEIL.

This sequence belongs to the AIR synthase family.

The protein localises to the cytoplasm. The catalysed reaction is 2-formamido-N(1)-(5-O-phospho-beta-D-ribosyl)acetamidine + ATP = 5-amino-1-(5-phospho-beta-D-ribosyl)imidazole + ADP + phosphate + H(+). It participates in purine metabolism; IMP biosynthesis via de novo pathway; 5-amino-1-(5-phospho-D-ribosyl)imidazole from N(2)-formyl-N(1)-(5-phospho-D-ribosyl)glycinamide: step 2/2. In Glaesserella parasuis serovar 5 (strain SH0165) (Haemophilus parasuis), this protein is Phosphoribosylformylglycinamidine cyclo-ligase.